The chain runs to 257 residues: UPF0246 protein BF3795 (257 aa).

This sequence belongs to the UPF0246 family.

The sequence is that of UPF0246 protein BF3795 from Bacteroides fragilis (strain ATCC 25285 / DSM 2151 / CCUG 4856 / JCM 11019 / LMG 10263 / NCTC 9343 / Onslow / VPI 2553 / EN-2).